The sequence spans 509 residues: Glycerol kinase (509 aa).

Threonine 12 provides a ligand contact to ADP. Residues threonine 12, threonine 13, and serine 14 each contribute to the ATP site. A sn-glycerol 3-phosphate-binding site is contributed by threonine 12. Residue arginine 16 coordinates ADP. Arginine 82, glutamate 83, tyrosine 134, and aspartate 245 together coordinate sn-glycerol 3-phosphate. Positions 82, 83, 134, 245, and 246 each coordinate glycerol. ADP contacts are provided by threonine 267 and glycine 311. Threonine 267, glycine 311, glutamine 315, and glycine 412 together coordinate ATP. 2 residues coordinate ADP: glycine 412 and asparagine 416.

This sequence belongs to the FGGY kinase family.

It carries out the reaction glycerol + ATP = sn-glycerol 3-phosphate + ADP + H(+). The protein operates within polyol metabolism; glycerol degradation via glycerol kinase pathway; sn-glycerol 3-phosphate from glycerol: step 1/1. Its activity is regulated as follows. Inhibited by fructose 1,6-bisphosphate (FBP). In terms of biological role, key enzyme in the regulation of glycerol uptake and metabolism. Catalyzes the phosphorylation of glycerol to yield sn-glycerol 3-phosphate. The polypeptide is Glycerol kinase (Rhizorhabdus wittichii (strain DSM 6014 / CCUG 31198 / JCM 15750 / NBRC 105917 / EY 4224 / RW1) (Sphingomonas wittichii)).